The sequence spans 82 residues: Small ribosomal subunit protein eS27 (82 aa).

Cys37, Cys40, Cys56, and Cys59 together coordinate Zn(2+).

Belongs to the eukaryotic ribosomal protein eS27 family. In terms of assembly, component of the small ribosomal subunit. Mature ribosomes consist of a small (40S) and a large (60S) subunit. The 40S subunit contains about 32 different proteins and 1 molecule of RNA (18S). The 60S subunit contains 45 different proteins and 3 molecules of RNA (25S, 5.8S and 5S). It depends on Zn(2+) as a cofactor.

The protein localises to the cytoplasm. Component of the ribosome, a large ribonucleoprotein complex responsible for the synthesis of proteins in the cell. The small ribosomal subunit (SSU) binds messenger RNAs (mRNAs) and translates the encoded message by selecting cognate aminoacyl-transfer RNA (tRNA) molecules. The large subunit (LSU) contains the ribosomal catalytic site termed the peptidyl transferase center (PTC), which catalyzes the formation of peptide bonds, thereby polymerizing the amino acids delivered by tRNAs into a polypeptide chain. The nascent polypeptides leave the ribosome through a tunnel in the LSU and interact with protein factors that function in enzymatic processing, targeting, and the membrane insertion of nascent chains at the exit of the ribosomal tunnel. The polypeptide is Small ribosomal subunit protein eS27 (RPS27) (Candida albicans (strain SC5314 / ATCC MYA-2876) (Yeast)).